The sequence spans 480 residues: Cobyric acid synthase (480 aa).

A GATase cobBQ-type domain is found at 249 to 436 (KLKVVVPVLT…LHGFLDSEAA (188 aa)). Cysteine 330 functions as the Nucleophile in the catalytic mechanism. Histidine 428 is a catalytic residue.

The protein belongs to the CobB/CobQ family. CobQ subfamily.

Its pathway is cofactor biosynthesis; adenosylcobalamin biosynthesis. Its function is as follows. Catalyzes amidations at positions B, D, E, and G on adenosylcobyrinic A,C-diamide. NH(2) groups are provided by glutamine, and one molecule of ATP is hydrogenolyzed for each amidation. The polypeptide is Cobyric acid synthase (Vibrio vulnificus (strain YJ016)).